Consider the following 819-residue polypeptide: Deubiquitinase MYSM1 (819 aa).

The segment covering 1 to 12 has biased composition (acidic residues); that stretch reads MEAEEADVDVEG. The disordered stretch occupies residues 1–29; it reads MEAEEADVDVEGDVAAAAQPGNDESTASV. Residue S107 is modified to Phosphoserine. Residues 113-164 enclose the SANT domain; it reads SHSVKWTVEEKELFEQGLAKFGRRWTKIATLLKSRTVLQVKSYARQYFKNKV. A Glycyl lysine isopeptide (Lys-Gly) (interchain with G-Cter in SUMO2) cross-link involves residue K184. S215 is modified (phosphoserine). Disordered regions lie at residues 228 to 247, 260 to 279, and 318 to 347; these read ELTS…DVPN, QEGP…KQGE, and LHRG…NEML. Over residues 230 to 240 the composition is skewed to polar residues; sequence TSQTSQNSGSH. Phosphothreonine is present on T233. Over residues 318–340 the composition is skewed to basic and acidic residues; sequence LHRGEVREEAKHSPSPEPCERQD. Phosphoserine is present on S332. Residues 363 to 461 form the SWIRM domain; it reads LKPPEQEVEI…FGCEQAVYNR (99 aa). Residues 568–700 form the MPN domain; that stretch reads VKVAAEALLI…PLPYSQITCL (133 aa). H647, H649, and D660 together coordinate Zn(2+). The JAMM motif motif lies at 647–660; sequence HSHPAFDPNPSLRD. The short motif at 765–769 is the LXXLL motif element; it reads LQKLL.

Belongs to the peptidase M67A family. MYSM1 subfamily. In terms of assembly, component of a large chromatin remodeling complex, at least composed of MYSM1, PCAF, RBM10 and KIF11/TRIP5. Binds histones.

It localises to the nucleus. The protein resides in the cytoplasm. Its function is as follows. Metalloprotease with deubiquitinase activity that plays important regulator roles in hematopoietic stem cell function, blood cell production and immune response. Participates in the normal programming of B-cell responses to antigen after the maturation process. Within the cytoplasm, plays critical roles in the repression of innate immunity and autoimmunity. Removes 'Lys-63'-linked polyubiquitins from TRAF3 and TRAF6 complexes. Attenuates NOD2-mediated inflammation and tissue injury by promoting 'Lys-63'-linked deubiquitination of RIPK2 component. Suppresses the CGAS-STING1 signaling pathway by cleaving STING1 'Lys-63'-linked ubiquitin chains. In the nucleus, acts as a hematopoietic transcription regulator derepressing a range of genes essential for normal stem cell differentiation including EBF1 and PAX5 in B-cells, ID2 in NK-cell progenitor or FLT3 in dendritic cell precursors. Deubiquitinates monoubiquitinated histone H2A, a specific tag for epigenetic transcriptional repression, leading to dissociation of histone H1 from the nucleosome. This Mus musculus (Mouse) protein is Deubiquitinase MYSM1 (Mysm1).